We begin with the raw amino-acid sequence, 201 residues long: Peptidyl-prolyl cis-trans isomerase FKBP11 (201 aa).

Residues 1-27 (MTLSPLLLPLQLLLLLLFSGAVCRAEA) form the signal peptide. The PPIase FKBP-type domain maps to 57–144 (GDTLHIHYTG…QYDVELIALI (88 aa)). Residues 156–176 (ILPLVGIAMVPALLGLIGYHL) form a helical membrane-spanning segment.

This sequence belongs to the FKBP-type PPIase family. Interacts with IFITM5.

It localises to the membrane. The enzyme catalyses [protein]-peptidylproline (omega=180) = [protein]-peptidylproline (omega=0). In terms of biological role, PPIases accelerate the folding of proteins during protein synthesis. This Mus musculus (Mouse) protein is Peptidyl-prolyl cis-trans isomerase FKBP11 (Fkbp11).